The following is a 39-amino-acid chain: Potassium channel toxin alpha-KTx 2.8 (39 aa).

Cystine bridges form between Cys-7–Cys-29, Cys-13–Cys-34, and Cys-17–Cys-36.

The protein belongs to the short scorpion toxin superfamily. Potassium channel inhibitor family. Alpha-KTx 02 subfamily. As to expression, expressed by the venom gland.

It is found in the secreted. Blocks Kv1.3/KCNA3 voltage-gated potassium channels of human T-lymphocytes (Kd=0.71 nM). This is Potassium channel toxin alpha-KTx 2.8 from Centruroides elegans (Bark scorpion).